A 434-amino-acid chain; its full sequence is AT-rich interactive domain-containing protein 5 (434 aa).

The segment at 1-120 (MMADTEMQEQ…SSPHVPEESV (120 aa)) is disordered. 3 stretches are compositionally biased toward basic and acidic residues: residues 25–37 (ELEK…ERPK), 43–54 (DTTHTLDSDVHL), and 78–90 (RNGD…KKIT). Residues 92-102 (DGGQEETTLGE) are compositionally biased toward polar residues. An ARID domain is found at 142–233 (PQDQEAFIKE…ALLEYEKHLR (92 aa)). The segment at 237–274 (ELNLPGSASLPSSGIEKEASSHQASGSGRTRRDAAARA) is disordered. In terms of domain architecture, sHSP spans 336 to 434 (AEVIDVGPPA…RLFVRVPFEQ (99 aa)).

It belongs to the small heat shock protein (HSP20) family.

Its subcellular location is the nucleus. The protein is AT-rich interactive domain-containing protein 5 (ARID5) of Arabidopsis thaliana (Mouse-ear cress).